Reading from the N-terminus, the 320-residue chain is Acetyl-coenzyme A carboxylase carboxyl transferase subunit alpha (320 aa).

The CoA carboxyltransferase C-terminal domain maps to 41–295 (RIEEKAGQAL…GEAIAQAFDE (255 aa)).

This sequence belongs to the AccA family. Acetyl-CoA carboxylase is a heterohexamer composed of biotin carboxyl carrier protein (AccB), biotin carboxylase (AccC) and two subunits each of ACCase subunit alpha (AccA) and ACCase subunit beta (AccD).

Its subcellular location is the cytoplasm. It carries out the reaction N(6)-carboxybiotinyl-L-lysyl-[protein] + acetyl-CoA = N(6)-biotinyl-L-lysyl-[protein] + malonyl-CoA. Its pathway is lipid metabolism; malonyl-CoA biosynthesis; malonyl-CoA from acetyl-CoA: step 1/1. In terms of biological role, component of the acetyl coenzyme A carboxylase (ACC) complex. First, biotin carboxylase catalyzes the carboxylation of biotin on its carrier protein (BCCP) and then the CO(2) group is transferred by the carboxyltransferase to acetyl-CoA to form malonyl-CoA. This is Acetyl-coenzyme A carboxylase carboxyl transferase subunit alpha from Bradyrhizobium sp. (strain BTAi1 / ATCC BAA-1182).